The sequence spans 373 residues: Flagellar P-ring protein (373 aa).

An N-terminal signal peptide occupies residues 1–30 (MTNRWSFDVKKNLVTLILTWLCLSISTAQA).

Belongs to the FlgI family. As to quaternary structure, the basal body constitutes a major portion of the flagellar organelle and consists of four rings (L,P,S, and M) mounted on a central rod.

Its subcellular location is the periplasm. The protein resides in the bacterial flagellum basal body. Its function is as follows. Assembles around the rod to form the L-ring and probably protects the motor/basal body from shearing forces during rotation. The protein is Flagellar P-ring protein of Aliivibrio salmonicida (strain LFI1238) (Vibrio salmonicida (strain LFI1238)).